The chain runs to 363 residues: Peptide chain release factor 2 (363 aa).

The residue at position 251 (glutamine 251) is an N5-methylglutamine.

The protein belongs to the prokaryotic/mitochondrial release factor family. In terms of processing, methylated by PrmC. Methylation increases the termination efficiency of RF2.

Its subcellular location is the cytoplasm. Functionally, peptide chain release factor 2 directs the termination of translation in response to the peptide chain termination codons UGA and UAA. In Helicobacter acinonychis (strain Sheeba), this protein is Peptide chain release factor 2.